The following is a 476-amino-acid chain: Ribulose bisphosphate carboxylase large chain (476 aa).

Residues N124 and T174 each contribute to the substrate site. Catalysis depends on K176, which acts as the Proton acceptor. K178 lines the substrate pocket. Positions 202, 204, and 205 each coordinate Mg(2+). K202 carries the post-translational modification N6-carboxylysine. H295 (proton acceptor) is an active-site residue. Residues R296, H328, and S380 each coordinate substrate.

This sequence belongs to the RuBisCO large chain family. Type I subfamily. In terms of assembly, heterohexadecamer of 8 large chains and 8 small chains; disulfide-linked. The disulfide link is formed within the large subunit homodimers. Mg(2+) is required as a cofactor. In terms of processing, the disulfide bond which can form in the large chain dimeric partners within the hexadecamer appears to be associated with oxidative stress and protein turnover.

Its subcellular location is the carboxysome. It catalyses the reaction 2 (2R)-3-phosphoglycerate + 2 H(+) = D-ribulose 1,5-bisphosphate + CO2 + H2O. The catalysed reaction is D-ribulose 1,5-bisphosphate + O2 = 2-phosphoglycolate + (2R)-3-phosphoglycerate + 2 H(+). RuBisCO catalyzes two reactions: the carboxylation of D-ribulose 1,5-bisphosphate, the primary event in carbon dioxide fixation, as well as the oxidative fragmentation of the pentose substrate in the photorespiration process. Both reactions occur simultaneously and in competition at the same active site. This Acaryochloris marina (strain MBIC 11017) protein is Ribulose bisphosphate carboxylase large chain.